We begin with the raw amino-acid sequence, 99 residues long: uncharacterized protein (99 aa).

This sequence belongs to the HesB/IscA family.

This is an uncharacterized protein from Staphylococcus haemolyticus (strain JCSC1435).